The primary structure comprises 241 residues: Glutamate/aspartate import ATP-binding protein GltL (241 aa).

The ABC transporter domain occupies 2–236 (ITLKNVSKWY…PKSDRAKDFL (235 aa)). Residue 34–41 (GPSGSGKS) coordinates ATP.

Belongs to the ABC transporter superfamily. As to quaternary structure, the complex is composed of two ATP-binding proteins (GltL), two transmembrane proteins (GltJ and GltK) and a solute-binding protein (GltI).

It localises to the cell inner membrane. The enzyme catalyses a polar amino acid(out) + ATP + H2O = a polar amino acid(in) + ADP + phosphate + H(+). It carries out the reaction L-glutamate(out) + ATP + H2O = L-glutamate(in) + ADP + phosphate + H(+). The catalysed reaction is L-aspartate(out) + ATP + H2O = L-aspartate(in) + ADP + phosphate + H(+). Part of the ABC transporter complex GltIJKL involved in glutamate and aspartate uptake. Probably responsible for energy coupling to the transport system. The polypeptide is Glutamate/aspartate import ATP-binding protein GltL (gltL) (Escherichia coli O157:H7).